A 24-amino-acid chain; its full sequence is Cytochrome c oxidase subunit 7A2, mitochondrial (24 aa).

Positions 1–13 are enriched in basic and acidic residues; it reads FENKVPEKQKLFQ. The tract at residues 1–24 is disordered; it reads FENKVPEKQKLFQEDNGIPVHLKG. Lys-10 is modified (N6-acetyllysine).

This sequence belongs to the cytochrome c oxidase VIIa family. In terms of assembly, component of the cytochrome c oxidase (complex IV, CIV), a multisubunit enzyme composed of 14 subunits. The complex is composed of a catalytic core of 3 subunits MT-CO1, MT-CO2 and MT-CO3, encoded in the mitochondrial DNA, and 11 supernumerary subunits COX4I, COX5A, COX5B, COX6A, COX6B, COX6C, COX7A, COX7B, COX7C, COX8 and NDUFA4, which are encoded in the nuclear genome. The complex exists as a monomer or a dimer and forms supercomplexes (SCs) in the inner mitochondrial membrane with NADH-ubiquinone oxidoreductase (complex I, CI) and ubiquinol-cytochrome c oxidoreductase (cytochrome b-c1 complex, complex III, CIII), resulting in different assemblies (supercomplex SCI(1)III(2)IV(1) and megacomplex MCI(2)III(2)IV(2)). Interacts with PET100.

Its subcellular location is the mitochondrion inner membrane. It participates in energy metabolism; oxidative phosphorylation. In terms of biological role, component of the cytochrome c oxidase, the last enzyme in the mitochondrial electron transport chain which drives oxidative phosphorylation. The respiratory chain contains 3 multisubunit complexes succinate dehydrogenase (complex II, CII), ubiquinol-cytochrome c oxidoreductase (cytochrome b-c1 complex, complex III, CIII) and cytochrome c oxidase (complex IV, CIV), that cooperate to transfer electrons derived from NADH and succinate to molecular oxygen, creating an electrochemical gradient over the inner membrane that drives transmembrane transport and the ATP synthase. Cytochrome c oxidase is the component of the respiratory chain that catalyzes the reduction of oxygen to water. Electrons originating from reduced cytochrome c in the intermembrane space (IMS) are transferred via the dinuclear copper A center (CU(A)) of subunit 2 and heme A of subunit 1 to the active site in subunit 1, a binuclear center (BNC) formed by heme A3 and copper B (CU(B)). The BNC reduces molecular oxygen to 2 water molecules using 4 electrons from cytochrome c in the IMS and 4 protons from the mitochondrial matrix. The sequence is that of Cytochrome c oxidase subunit 7A2, mitochondrial (COX7A2) from Ovis aries (Sheep).